Here is a 326-residue protein sequence, read N- to C-terminus: Glycine N(alpha)-acyltransferase (326 aa).

This sequence belongs to the acetyltransferase family.

It catalyses the reaction a (3R)-hydroxyacyl-[ACP] + glycine = a lyso-glycine lipid + holo-[ACP] + H(+). The catalysed reaction is (3R)-hydroxyhexadecanoyl-[ACP] + glycine = N-[(3R)-3-hydroxyhexadecanoyl]-glycine + holo-[ACP] + H(+). Its pathway is lipid metabolism. Is involved in the production of glycine lipids (GL), which are phosphorus-free membrane lipids. Catalyzes the first step of GL biosynthesis, i.e. the N-acylation of glycine via addition of a 3-hydroxy fatty acyl group, to form a range of monoacylated glycine (also named lyso-glycine lipids or lyso-GL). As an example, catalyzes the production of commendamide, an N-acylated (3-OH C16:0) derivative of glycine with hemolytic activity and the ability to solubilize cholesterol micelles; this compound can also activate NF-kB through the G-protein coupled receptor GPCR G2A/132. The sequence is that of Glycine N(alpha)-acyltransferase from Phocaeicola vulgatus (strain ATCC 8482 / DSM 1447 / JCM 5826 / CCUG 4940 / NBRC 14291 / NCTC 11154) (Bacteroides vulgatus).